The following is a 470-amino-acid chain: Methylenetetrahydrofolate--tRNA-(uracil-5-)-methyltransferase TrmFO (470 aa).

10–15 (GAGLAG) contacts FAD.

It belongs to the MnmG family. TrmFO subfamily. FAD serves as cofactor.

The protein localises to the cytoplasm. It carries out the reaction uridine(54) in tRNA + (6R)-5,10-methylene-5,6,7,8-tetrahydrofolate + NADH + H(+) = 5-methyluridine(54) in tRNA + (6S)-5,6,7,8-tetrahydrofolate + NAD(+). The enzyme catalyses uridine(54) in tRNA + (6R)-5,10-methylene-5,6,7,8-tetrahydrofolate + NADPH + H(+) = 5-methyluridine(54) in tRNA + (6S)-5,6,7,8-tetrahydrofolate + NADP(+). In terms of biological role, catalyzes the folate-dependent formation of 5-methyl-uridine at position 54 (M-5-U54) in all tRNAs. This Prochlorococcus marinus (strain MIT 9312) protein is Methylenetetrahydrofolate--tRNA-(uracil-5-)-methyltransferase TrmFO.